The primary structure comprises 117 residues: Ribosome-binding factor A (117 aa).

It belongs to the RbfA family. Monomer. Binds 30S ribosomal subunits, but not 50S ribosomal subunits or 70S ribosomes.

The protein localises to the cytoplasm. Functionally, one of several proteins that assist in the late maturation steps of the functional core of the 30S ribosomal subunit. Associates with free 30S ribosomal subunits (but not with 30S subunits that are part of 70S ribosomes or polysomes). Required for efficient processing of 16S rRNA. May interact with the 5'-terminal helix region of 16S rRNA. The protein is Ribosome-binding factor A of Petrotoga mobilis (strain DSM 10674 / SJ95).